Consider the following 159-residue polypeptide: Transcription elongation factor GreA (159 aa).

Belongs to the GreA/GreB family.

Its function is as follows. Necessary for efficient RNA polymerase transcription elongation past template-encoded arresting sites. The arresting sites in DNA have the property of trapping a certain fraction of elongating RNA polymerases that pass through, resulting in locked ternary complexes. Cleavage of the nascent transcript by cleavage factors such as GreA or GreB allows the resumption of elongation from the new 3'terminus. GreA releases sequences of 2 to 3 nucleotides. The polypeptide is Transcription elongation factor GreA (Mycoplasmoides gallisepticum (strain R(low / passage 15 / clone 2)) (Mycoplasma gallisepticum)).